An 85-amino-acid polypeptide reads, in one-letter code: MPKLEMMLLVLLILPLCYIDAVGPPPPWNMEDEIIEHWQELHCHEISDLTPWILCSPEPLCGGKGCCAQEVCDCSGPVCTCPPCL.

The N-terminal stretch at 1-21 is a signal peptide; that stretch reads MPKLEMMLLVLLILPLCYIDA. A propeptide spanning residues 22–40 is cleaved from the precursor; the sequence is VGPPPPWNMEDEIIEHWQE.

It belongs to the conotoxin D superfamily. Post-translationally, contains 5 disulfide bonds. Expressed by the venom duct.

It localises to the secreted. Its function is as follows. Probable neurotoxin. In Conus litteratus (Lettered cone), this protein is Conotoxin Lt28.7.